A 636-amino-acid chain; its full sequence is Rust resistance kinase Lr10 (636 aa).

A signal peptide spans 1 to 24 (MSKLLVIALLLLPLINHGIYLATA). Over 25 to 276 (WDDQDFFKYC…MPDPHGSHIK (252 aa)) the chain is Extracellular. N-linked (GlcNAc...) asparagine glycosylation is found at N56, N177, and N222. Residues 277–297 (VIAATSSVAAFVALLLTVATV) form a helical membrane-spanning segment. Topologically, residues 298 to 636 (LYLSLKTRYN…FVSSENELMS (339 aa)) are cytoplasmic. Residues 339–628 (RRFKEKVGQG…SLQMPPKPFV (290 aa)) enclose the Protein kinase domain. ATP is bound by residues 345-353 (VGQGGFGSV) and K367. D466 serves as the catalytic Proton acceptor.

The protein belongs to the protein kinase superfamily. Ser/Thr protein kinase family. In terms of tissue distribution, specifically expressed in the aerial parts of the plant.

Its subcellular location is the cell membrane. The enzyme catalyses L-seryl-[protein] + ATP = O-phospho-L-seryl-[protein] + ADP + H(+). It catalyses the reaction L-threonyl-[protein] + ATP = O-phospho-L-threonyl-[protein] + ADP + H(+). This is Rust resistance kinase Lr10 from Triticum aestivum (Wheat).